The chain runs to 253 residues: 2-dehydro-3-deoxy-D-gluconate 5-dehydrogenase (253 aa).

An NAD(+)-binding site is contributed by 14–38 (VVTGCDTGLGQGMALGLAQAGCDIV). Position 145 (S145) interacts with substrate. Y158 functions as the Proton acceptor in the catalytic mechanism.

This sequence belongs to the short-chain dehydrogenases/reductases (SDR) family. Homotetramer.

It carries out the reaction 2-dehydro-3-deoxy-D-gluconate + NAD(+) = 3-deoxy-D-glycero-2,5-hexodiulosonate + NADH + H(+). The enzyme catalyses 4-pregnen-20,21-diol-3-one + NAD(+) = 21-hydroxyprogesterone + NADH + H(+). Its function is as follows. Catalyzes the reversible reduction of 2,5-diketo-3-deoxygluconate (DKII or 4,6-dihydroxy-2,5-dioxohexanoate) into 2-keto-3-deoxygluconate (KDG or 2-dehydro-3-deoxygluconate) with a concomitant oxidation of NADH. To a lesser extent, can also reduce 5-keto-D-gluconate and oxidize D-gluconate and 1,2-propanediol. Together with KduI, seems to play a role in the catabolism of hexuronates under osmotic stress conditions, substituting for the regular hexuronate degrading enzymes UxaABC and UxuAB whose expression is repressed in these conditions. In vitro, also exhibits NADH-dependent 20-ketosteroid reductase activity against eukaryotic steroid hormone 11-deoxycorticosterone (11-DOC), which is converted into the product 4-pregnen-20,21-diol-3-one. In addition to 11-DOC, five other C21 steroid compounds (11-deoxycortisol, cortisol, corticosterone, cortisone, and 21-hydroxypregnenolone) are reduced by KduD, but steroids lacking the hydroxyl group at C21 position, such as pregnenolone, testosterone propionate, cortisone acetate, or progesterone, cannot be used as substrate. This is 2-dehydro-3-deoxy-D-gluconate 5-dehydrogenase from Escherichia coli (strain K12).